Here is a 168-residue protein sequence, read N- to C-terminus: Small ribosomal subunit protein uS8 (168 aa).

The tract at residues 59-93 is not found in other S8 sequences; that stretch reads EEYKKMKELAEKSPNPKMKRYLKQLEEYNKGTQYP.

It belongs to the universal ribosomal protein uS8 family. As to quaternary structure, part of the 30S ribosomal subunit. Contacts proteins S5 and S12.

Functionally, one of the primary rRNA binding proteins, it binds directly to 16S rRNA central domain where it helps coordinate assembly of the platform of the 30S subunit. This chain is Small ribosomal subunit protein uS8, found in Aquifex aeolicus (strain VF5).